We begin with the raw amino-acid sequence, 198 residues long: Neutrophil gelatinase-associated lipocalin (198 aa).

The signal sequence occupies residues 1–20 (MPLGLLWLGLALLGALHAQA). Gln-21 is subject to Pyrrolidone carboxylic acid. 72-74 (YAT) is an a carboxymycobactin binding site. An N-linked (GlcNAc...) asparagine glycan is attached at Asn-85. The cysteines at positions 96 and 195 are disulfide-linked. Tyr-126 contributes to the enterobactin binding site. A carboxymycobactin contacts are provided by Lys-145, Lys-154, and Tyr-158. An enterobactin-binding site is contributed by Lys-154.

It belongs to the calycin superfamily. Lipocalin family. Monomer. Homodimer; disulfide-linked. Heterodimer; disulfide-linked with MMP9. As to expression, detected in neutrophils (at protein level). Expressed in bone marrow and in tissues that are prone to exposure to microorganism. High expression is found in bone marrow as well as in uterus, prostate, salivary gland, stomach, appendix, colon, trachea and lung. Expressed in the medullary tubules of the kidney. Not found in the small intestine or peripheral blood leukocytes.

It is found in the secreted. Its subcellular location is the cytoplasmic granule lumen. The protein resides in the cytoplasmic vesicle lumen. Its function is as follows. Iron-trafficking protein involved in multiple processes such as apoptosis, innate immunity and renal development. Binds iron through association with 2,3-dihydroxybenzoic acid (2,3-DHBA), a siderophore that shares structural similarities with bacterial enterobactin, and delivers or removes iron from the cell, depending on the context. Iron-bound form (holo-24p3) is internalized following binding to the SLC22A17 (24p3R) receptor, leading to release of iron and subsequent increase of intracellular iron concentration. In contrast, association of the iron-free form (apo-24p3) with the SLC22A17 (24p3R) receptor is followed by association with an intracellular siderophore, iron chelation and iron transfer to the extracellular medium, thereby reducing intracellular iron concentration. Involved in apoptosis due to interleukin-3 (IL3) deprivation: iron-loaded form increases intracellular iron concentration without promoting apoptosis, while iron-free form decreases intracellular iron levels, inducing expression of the proapoptotic protein BCL2L11/BIM, resulting in apoptosis. Involved in innate immunity; limits bacterial proliferation by sequestering iron bound to microbial siderophores, such as enterobactin. Can also bind siderophores from M.tuberculosis. The chain is Neutrophil gelatinase-associated lipocalin (LCN2) from Homo sapiens (Human).